We begin with the raw amino-acid sequence, 528 residues long: Probable feruloyl esterase B-1 (528 aa).

The N-terminal stretch at 1–19 (MMWWFLLIGLASAAATASS) is a signal peptide. Intrachain disulfides connect Cys-29–Cys-78, Cys-64–Cys-117, Cys-190–Cys-445, Cys-259–Cys-276, Cys-285–Cys-295, and Cys-505–Cys-527. N-linked (GlcNAc...) asparagine glycans are attached at residues Asn-83 and Asn-101. Ser-191 serves as the catalytic Acyl-ester intermediate. Residues Asp-260, Asp-263, Ala-265, Asp-267, and Ile-269 each contribute to the Ca(2+) site. 3 N-linked (GlcNAc...) asparagine glycosylation sites follow: Asn-286, Asn-354, and Asn-385. Residues Asp-404 and His-444 each act as charge relay system in the active site.

Belongs to the tannase family.

It localises to the secreted. It catalyses the reaction feruloyl-polysaccharide + H2O = ferulate + polysaccharide.. Its function is as follows. Involved in degradation of plant cell walls. Hydrolyzes the feruloyl-arabinose ester bond in arabinoxylans as well as the feruloyl-galactose and feruloyl-arabinose ester bonds in pectin. The protein is Probable feruloyl esterase B-1 (faeB-1) of Aspergillus fumigatus (strain ATCC MYA-4609 / CBS 101355 / FGSC A1100 / Af293) (Neosartorya fumigata).